Consider the following 112-residue polypeptide: uncharacterized protein (112 aa).

Disordered stretches follow at residues 1–53 (MSKL…QRLK) and 80–112 (MINQ…MLEL). Polar residues predominate over residues 8–22 (SALQKLIESQKNPNA). Over residues 86–96 (ETKKRKRKQKK) the composition is skewed to basic residues. The span at 101 to 112 (DYGVFEEDMLEL) shows a compositional bias: acidic residues.

It localises to the nucleus. The protein resides in the nucleolus. This is an uncharacterized protein from Schizosaccharomyces pombe (strain 972 / ATCC 24843) (Fission yeast).